The chain runs to 55 residues: Large ribosomal subunit protein bL33 (55 aa).

It belongs to the bacterial ribosomal protein bL33 family.

This chain is Large ribosomal subunit protein bL33, found in Methylobacterium nodulans (strain LMG 21967 / CNCM I-2342 / ORS 2060).